The sequence spans 427 residues: Ribose-phosphate pyrophosphokinase 1 (427 aa).

Residues D128, H130, and D143 each contribute to the Mg(2+) site. 4 positions are modified to phosphoserine: S199, S218, S271, and S295.

This sequence belongs to the ribose-phosphate pyrophosphokinase family.

Its subcellular location is the cytoplasm. It carries out the reaction D-ribose 5-phosphate + ATP = 5-phospho-alpha-D-ribose 1-diphosphate + AMP + H(+). It functions in the pathway metabolic intermediate biosynthesis; 5-phospho-alpha-D-ribose 1-diphosphate biosynthesis; 5-phospho-alpha-D-ribose 1-diphosphate from D-ribose 5-phosphate (route I): step 1/1. 5-phosphoribose 1-diphosphate synthase involved in nucleotide, histidine, and tryptophan biosynthesis. Active in heteromultimeric complexes with other 5-phosphoribose 1-diphosphate synthases (PRS2, PRS3, PRS4 and PRS5). The protein is Ribose-phosphate pyrophosphokinase 1 (PRS1) of Saccharomyces cerevisiae (strain ATCC 204508 / S288c) (Baker's yeast).